Reading from the N-terminus, the 1108-residue chain is MSLLFLRRAKPLFVSCCSATHSRSSFLSPTLTNQLVRSFHGSRTMSESEKKILTEEELERKKKKEEKAKEKELKKQKALEKERLAELKAKQAKDGTNVPKKSAKKSSKRDASEENPEDFVDPETPLGERKRLSSQMAKQYSPATVEKSWYAWWEKSDLFKADAKSSKPPFVIVLPPPNVTGALHIGHALTSAIEDTIIRWKRMSGYNALWVPGVDHAGIATQVVVEKKIMRDRGMTRHDVGREEFVKEVWKWKNQYGGTILTQLRRLGASLDWSRECFTMDEQRSKAVTEAFVRLYKEGLIYRDIRLVNWDCILRTAISDVEVEYIDIKEKTLLKVPGYEKPVEFGLLTSFAYPLEGGLGEVIVATTRVETMLGDTAIAIHPDDARYKHLHGKFAVHPFNGRKLPIICDGILVDPNFGTGCVKITPAHDPNDCEVGKRHKLEFINIFTDDGKINTNGGSDFAGMPRFAAREAVVEALQKQGLYRGAKNNEMRLGLCSRTNDVIEPMIKPQWYVNCSMIGKEALDVAITDENKKLEFVPKQYTAEWRRWLENIRDWCISRQLWWGHRIPAWYATLEEDQLKEVGAYSDHWVVARTEDDAREEAAQKFLGKKFELTRDPDVLDTWFSSGLFPLSVLGWPDVTDDFKAFYPTSVLETGHDILFFWVARMVMMGMKLGGEVPFSKVYFHPMIRDAHGRKMSKSLGNVIDPLEVINGVTLEGLHKRLEEGNLDPKEVIVAKEGQVKDFPNGIPECGTDALRFALVSYTAQSDKINLDILRVVGYRQWCNKLWNAVRFAMMKLGDGYTPPQTLSPETMPFSCQWILSVLNKAISKTVVSLDAFEFSDAANTIYAWWQYQFCDVYIEAIKPYFAGDNPTFASERAHAQHALWISLETGLRLLHPFMPFVTEELWQRLPAPKDTERKASIMICDYPSAIENWSNEKVESEMDTVLATVKCMRALRAGLLEKQKNERLPAFALCENNVTSEIVKSHELEIRTLANLSSLEVVSKGQHAAPPGSSVETVNENLKVYLEVDGAINTEAEQEKIRNKIGELQKQKEKLQKMMSVSTYEEKVPANIKEDNANKLAKILQEFDFFEKESARLAAETSNSGNQ.

A mitochondrion-targeting transit peptide spans Met1–Ser46. Over residues Glu57–Lys93 the composition is skewed to basic and acidic residues. The interval Glu57–Lys138 is disordered. The 'HIGH' region motif lies at Pro177–His187. Positions Lys695 to Ser699 match the 'KMSKS' region motif. Lys698 is an ATP binding site. A coiled-coil region spans residues Ala1032–Thr1064.

This sequence belongs to the class-I aminoacyl-tRNA synthetase family.

It is found in the mitochondrion. It localises to the cytoplasm. The protein localises to the cytosol. It carries out the reaction tRNA(Val) + L-valine + ATP = L-valyl-tRNA(Val) + AMP + diphosphate. Its function is as follows. Required for embryo development and seed viability. This chain is Valine--tRNA ligase, mitochondrial 1, found in Arabidopsis thaliana (Mouse-ear cress).